Consider the following 214-residue polypeptide: Osteoclast-stimulating factor 1 (214 aa).

Positions 12–71 (GQVKVFRALFTFDPRTPDELYFEEGDILYISDTSDTNWWKGTCRGRTGLIPSNYVAEQAE) constitute an SH3 domain. ANK repeat units follow at residues 72-101 (TIDH…GING), 105-135 (AGNT…ELNQ), and 139-168 (LGDT…RTDI).

In terms of tissue distribution, ubiquitously expressed.

It is found in the cytoplasm. Induces bone resorption, acting probably through a signaling cascade which results in the secretion of factor(s) enhancing osteoclast formation and activity. This is Osteoclast-stimulating factor 1 (ostf1) from Monopterus albus (Swamp eel).